We begin with the raw amino-acid sequence, 453 residues long: Pre-mRNA-splicing factor prp46 (453 aa).

The span at 62–71 (EKQAKAAAAG) shows a compositional bias: low complexity. A disordered region spans residues 62–129 (EKQAKAAAAG…PSATRQQRPD (68 aa)). WD repeat units lie at residues 142-181 (GHLG…LRLT), 184-223 (GHIS…VIRH), 226-265 (GHLS…NIHV), 268-309 (GHKG…GVLT), 311-350 (HKKG…QNFE), 351-389 (GHNA…KFQS), and 400-439 (DAEA…TPES). The segment at 432–453 (DDEATPESHPVTWAPTLGRQRY) is disordered.

This sequence belongs to the WD repeat PRL1/PRL2 family. Associated with the spliceosome.

Its subcellular location is the cytoplasm. It localises to the nucleus. Functionally, involved in pre-mRNA splicing and required for cell cycle progression at G2/M. This chain is Pre-mRNA-splicing factor prp46 (prp46), found in Aspergillus fumigatus (strain ATCC MYA-4609 / CBS 101355 / FGSC A1100 / Af293) (Neosartorya fumigata).